The sequence spans 589 residues: Phenylalanine--tRNA ligase beta subunit (589 aa).

In terms of domain architecture, B5 spans 302 to 379 (LPYRKEMVRA…IAYGYNNIQM (78 aa)). Residues D357, D363, E366, and D367 each coordinate Mg(2+).

The protein belongs to the phenylalanyl-tRNA synthetase beta subunit family. Type 2 subfamily. In terms of assembly, heterotetramer; dimer of two heterodimers formed by FARSA and FARSB. The cofactor is Mg(2+).

It localises to the cytoplasm. It carries out the reaction tRNA(Phe) + L-phenylalanine + ATP = L-phenylalanyl-tRNA(Phe) + AMP + diphosphate + H(+). The protein is Phenylalanine--tRNA ligase beta subunit (Farsb) of Mus musculus (Mouse).